Here is a 483-residue protein sequence, read N- to C-terminus: MTAAVTENNGAGSDSSVAGRVVRVIGPVVDVEFPRGAIPELFNALHAEITLPSVAKTLTLEVAQHLGDNLVRTVSMQPTDGLIRGTSVSDTGKPISVPVGDVVKGHVFNALGDCLDAPGTGRDGEQWGIHRKPPAFDQLEGKTEILETGIKVIDLLTPYVKGGKIGLFGGAGVGKTVLIQEMITRIAREFSGTSVFAGVGERTREGTDLHLEMEEMGVLQDTALVFGQMDEPPGTRMRVALSALTMAEYFRDVQGQDVLLFIDNIFRFTQAGSEVSTLLGRMPSAVGYQPTLADEMGELQERITSTRGRSITSLQAIYVPADDYTDPAPATTFAHLDATTELSRPISQMGIYPAVDPLTSTSRILEPGIVGAEHFRVANEVKRILQKYKELQDIIAILGMDELQEEDKVLVGRARRLQKFLGQNFIVAEKFTGEPGSVVPLRDTIEAFDRICKGEFDHLPEQAFNSCGGLDDVEAAAKKIAGK.

Residue 169-176 (GGAGVGKT) participates in ATP binding.

The protein belongs to the ATPase alpha/beta chains family. In terms of assembly, F-type ATPases have 2 components, CF(1) - the catalytic core - and CF(0) - the membrane proton channel. CF(1) has five subunits: alpha(3), beta(3), gamma(1), delta(1), epsilon(1). CF(0) has three main subunits: a(1), b(2) and c(9-12). The alpha and beta chains form an alternating ring which encloses part of the gamma chain. CF(1) is attached to CF(0) by a central stalk formed by the gamma and epsilon chains, while a peripheral stalk is formed by the delta and b chains.

It is found in the cell membrane. It carries out the reaction ATP + H2O + 4 H(+)(in) = ADP + phosphate + 5 H(+)(out). Functionally, produces ATP from ADP in the presence of a proton gradient across the membrane. The catalytic sites are hosted primarily by the beta subunits. The chain is ATP synthase subunit beta from Rhodococcus opacus (strain B4).